The chain runs to 670 residues: Probable potassium transport system protein Kup (670 aa).

Residues Met1–His42 are disordered. Positions Ala15–Ala35 are enriched in low complexity. Transmembrane regions (helical) follow at residues Leu51–Leu71, Val91–Met111, Val144–Pro164, Pro180–Phe200, Val208–Val228, Gly254–Leu274, Trp290–Leu310, Leu322–Val342, Ile380–Phe400, Leu406–His426, Ala440–Val460, and Asp464–Lys484.

The protein belongs to the HAK/KUP transporter (TC 2.A.72) family.

It localises to the cell inner membrane. It catalyses the reaction K(+)(in) + H(+)(in) = K(+)(out) + H(+)(out). Transport of potassium into the cell. Likely operates as a K(+):H(+) symporter. The sequence is that of Probable potassium transport system protein Kup from Anaeromyxobacter dehalogenans (strain 2CP-C).